The chain runs to 279 residues: Tumor protein p63-regulated gene 1 protein (279 aa).

The interval 1-49 is disordered; that stretch reads MSTIGSFDGFQPVSLKQEEEDQPSENDHLSTKEGNSGKDPGSRRISRQQ. Residues 72 to 259 form the hSac2 domain; it reads VTRPGAIETA…ILIETYTGLM (188 aa).

It belongs to the TPRG1 family. As to expression, highly expressed in skin. Also detected at low levels in tongue and esophagus.

It localises to the cytoplasm. This is Tumor protein p63-regulated gene 1 protein from Mus musculus (Mouse).